A 358-amino-acid polypeptide reads, in one-letter code: Anhydro-N-acetylmuramic acid kinase (358 aa).

Position 9-16 (Gly-9–Asp-16) interacts with ATP.

Belongs to the anhydro-N-acetylmuramic acid kinase family.

It carries out the reaction 1,6-anhydro-N-acetyl-beta-muramate + ATP + H2O = N-acetyl-D-muramate 6-phosphate + ADP + H(+). It functions in the pathway amino-sugar metabolism; 1,6-anhydro-N-acetylmuramate degradation. The protein operates within cell wall biogenesis; peptidoglycan recycling. Its function is as follows. Catalyzes the specific phosphorylation of 1,6-anhydro-N-acetylmuramic acid (anhMurNAc) with the simultaneous cleavage of the 1,6-anhydro ring, generating MurNAc-6-P. Is required for the utilization of anhMurNAc either imported from the medium or derived from its own cell wall murein, and thus plays a role in cell wall recycling. The chain is Anhydro-N-acetylmuramic acid kinase from Acidiphilium cryptum (strain JF-5).